The following is a 588-amino-acid chain: Peptidoglycan D,D-transpeptidase FtsI (588 aa).

A helical membrane pass occupies residues 19–39 (FISWRFALLCGCILLALAFLL). Residue Ser307 is the Acyl-ester intermediate of the active site. A propeptide spanning residues 578–588 (INQGEGTGGRS) is cleaved from the precursor.

It belongs to the transpeptidase family. FtsI subfamily.

The protein localises to the cell inner membrane. It carries out the reaction Preferential cleavage: (Ac)2-L-Lys-D-Ala-|-D-Ala. Also transpeptidation of peptidyl-alanyl moieties that are N-acyl substituents of D-alanine.. The protein operates within cell wall biogenesis; peptidoglycan biosynthesis. In terms of biological role, catalyzes cross-linking of the peptidoglycan cell wall at the division septum. The polypeptide is Peptidoglycan D,D-transpeptidase FtsI (Escherichia coli O157:H7).